Reading from the N-terminus, the 108-residue chain is Peptidyl-prolyl cis-trans isomerase FKBP1C (108 aa).

The 89-residue stretch at 20–108 folds into the PPIase FKBP-type domain; it reads SQTCVMHYTG…VFDVELLKLE (89 aa).

The protein belongs to the FKBP-type PPIase family. FKBP1 subfamily.

It carries out the reaction [protein]-peptidylproline (omega=180) = [protein]-peptidylproline (omega=0). In terms of biological role, catalyzes the cis-trans isomerization of proline imidic peptide bonds in oligopeptides. This chain is Peptidyl-prolyl cis-trans isomerase FKBP1C, found in Homo sapiens (Human).